The following is a 134-amino-acid chain: Small ribosomal subunit protein uS8 (134 aa).

Belongs to the universal ribosomal protein uS8 family. In terms of assembly, part of the 30S ribosomal subunit. Contacts proteins S5 and S12.

Its function is as follows. One of the primary rRNA binding proteins, it binds directly to 16S rRNA central domain where it helps coordinate assembly of the platform of the 30S subunit. This is Small ribosomal subunit protein uS8 from Thermotoga neapolitana (strain ATCC 49049 / DSM 4359 / NBRC 107923 / NS-E).